A 142-amino-acid polypeptide reads, in one-letter code: Large ribosomal subunit protein uL13 (142 aa).

It belongs to the universal ribosomal protein uL13 family. As to quaternary structure, part of the 50S ribosomal subunit.

In terms of biological role, this protein is one of the early assembly proteins of the 50S ribosomal subunit, although it is not seen to bind rRNA by itself. It is important during the early stages of 50S assembly. The chain is Large ribosomal subunit protein uL13 from Thioalkalivibrio sulfidiphilus (strain HL-EbGR7).